Consider the following 253-residue polypeptide: MQKLIMGNWKMNGNSTSIKELCSGISQVQYDTSRVAIAVFPSSVYVKEVISQLPEKVGVGLQNITFYDDGAYTGEISARMLEDIGCDYLLIGHSERRSLFAESDEDVFKKLNKIIDTTITPVVCIGESLDDRQSGKLKQVLATQLSLILENLSVEQLAKVVIAYEPVWAIGTGVVASLEQIQETHQFIRSLLAKVDERLAKNIKIVYGGSLKAENAKDILSLPDVDGGLIGGASLKAAEFNEIINQANKICTE.

8 to 10 (NWK) is a binding site for substrate. The Electrophile role is filled by His-93. Glu-165 functions as the Proton acceptor in the catalytic mechanism. Substrate is bound by residues Gly-171, Ser-210, and 231-232 (GG).

The protein belongs to the triosephosphate isomerase family. As to quaternary structure, homodimer.

It is found in the cytoplasm. It carries out the reaction D-glyceraldehyde 3-phosphate = dihydroxyacetone phosphate. It functions in the pathway carbohydrate biosynthesis; gluconeogenesis. It participates in carbohydrate degradation; glycolysis; D-glyceraldehyde 3-phosphate from glycerone phosphate: step 1/1. Involved in the gluconeogenesis. Catalyzes stereospecifically the conversion of dihydroxyacetone phosphate (DHAP) to D-glyceraldehyde-3-phosphate (G3P). This Francisella tularensis subsp. tularensis (strain FSC 198) protein is Triosephosphate isomerase.